A 252-amino-acid chain; its full sequence is MLIGSHVSSTDPLAAAEVEGADVVQIFLGNPQSWKAPTLRSDADVLKATALPVYVHAPYLINVASANSRVRIPSRKILQQTCDAAADIGAAAVVVHGGYVADDNDLEDGFQRWRKALDQLQTDVPVYLENTAGGDHAMARRFDTIARLWDVIGETGIGFCLDTCHAWAAGEGLIHVVDRIKAITGRIDLVHCNDSKDEAGSGRDRHANLGSGQIDAELLVAAVKVAGAPVICETAEEGRKDDIAFLREKTSG.

The Zn(2+) site is built by His56, His96, Glu129, Asp162, His165, His191, Asp204, His206, and Glu233.

It belongs to the AP endonuclease 2 family. Zn(2+) is required as a cofactor.

The catalysed reaction is Endonucleolytic cleavage to 5'-phosphooligonucleotide end-products.. Endonuclease IV plays a role in DNA repair. It cleaves phosphodiester bonds at apurinic or apyrimidinic (AP) sites, generating a 3'-hydroxyl group and a 5'-terminal sugar phosphate. This Mycobacterium leprae (strain Br4923) protein is Probable endonuclease 4.